The following is a 155-amino-acid chain: Cathelicidin-1 (155 aa).

Residues 1-29 form the signal peptide; it reads METPRASLSLGRWSLWLLLLGLALPSASA. Residue glutamine 30 is modified to Pyrrolidone carboxylic acid. Residues 30 to 143 constitute a propeptide that is removed on maturation; the sequence is QALSYREAVL…KQPWAPPQAA (114 aa). Cystine bridges form between cysteine 85–cysteine 96, cysteine 107–cysteine 124, and cysteine 146–cysteine 154.

Belongs to the cathelicidin family. Large granules of neutrophils.

It localises to the secreted. In terms of biological role, potent microbicidal activity; active against S.aureus and E.coli. The chain is Cathelicidin-1 (CATHL1) from Bos taurus (Bovine).